Here is a 285-residue protein sequence, read N- to C-terminus: 4-diphosphocytidyl-2-C-methyl-D-erythritol kinase (285 aa).

The active site involves Lys-11. 93–103 (PLAAGLAGGSA) contributes to the ATP binding site. Residue Asp-135 is part of the active site.

It belongs to the GHMP kinase family. IspE subfamily.

The catalysed reaction is 4-CDP-2-C-methyl-D-erythritol + ATP = 4-CDP-2-C-methyl-D-erythritol 2-phosphate + ADP + H(+). It participates in isoprenoid biosynthesis; isopentenyl diphosphate biosynthesis via DXP pathway; isopentenyl diphosphate from 1-deoxy-D-xylulose 5-phosphate: step 3/6. Its function is as follows. Catalyzes the phosphorylation of the position 2 hydroxy group of 4-diphosphocytidyl-2C-methyl-D-erythritol. This Moorella thermoacetica (strain ATCC 39073 / JCM 9320) protein is 4-diphosphocytidyl-2-C-methyl-D-erythritol kinase.